Here is a 942-residue protein sequence, read N- to C-terminus: AP-1 complex subunit beta (942 aa).

HEAT repeat units follow at residues 45 to 82 (KDVSMLFTHVLNCMQTHNLELKKLVYLYVMNYAKNHPD), 117 to 154 (NITEHLCEPLRHALKDQDPYVRKTAAVCVAKLYDVNPE), 156 to 193 (VENQGFLNILNDLLGDSNPMVVANAVASLTEIDEVSKK), 273 to 313 (DVIR…KRPE), 384 to 421 (RASERCIQVLLDLIQTKVNYVVQEAIIVIKDIFRKYPN), and 458 to 495 (DNAHELLNSFLEGFKDENSQVQLQLLTSIVKLFLKRPK). Residues 590 to 700 (GLRNKEEEDE…NDLSFLGGGG (111 aa)) form a disordered region. Residues 596–609 (EEDEEEPDYVDDDN) show a composition bias toward acidic residues. Low complexity-rich tracts occupy residues 613–645 (QQGGQQQQGGYQQQQQQQQQGGYQQQQPQQQQP) and 664–677 (NNNNNNYGNNNNNN). Over residues 678–693 (MYSPQPQQFNGNSNDL) the composition is skewed to polar residues.

Belongs to the adaptor complexes large subunit family. As to quaternary structure, adaptor protein complex 1 (AP-1) is a heterotetramer composed of two large adaptins (gamma-type subunit and beta-type subunit), a medium adaptin (mu-type subunit) and a small adaptin (sigma-type subunit).

It localises to the golgi apparatus. Its subcellular location is the trans-Golgi network. It is found in the cytoplasmic vesicle. The protein localises to the clathrin-coated vesicle membrane. Functionally, subunit of clathrin-associated adaptor protein complex 1 that plays a role in protein sorting in the trans-Golgi network (TGN) and endosomes. The AP complexes mediate the recruitment of clathrin to membranes and the recognition of sorting signals within the cytosolic tails of transmembrane cargo molecules. Also involved in early steps of phagocytosis and macropinocytosis. This chain is AP-1 complex subunit beta (ap1b1), found in Dictyostelium discoideum (Social amoeba).